The chain runs to 86 residues: Myosin light chain alkali (86 aa).

Positions 11–46 constitute an EF-hand domain; the sequence is GCYEDFIECLKLYDKEENGTMMLAELQHALLALGES.

As to quaternary structure, myosin is a hexamer of 2 heavy chains and 4 light chains.

The protein is Myosin light chain alkali (Mlc1) of Drosophila subobscura (Fruit fly).